The following is a 157-amino-acid chain: 2-C-methyl-D-erythritol 2,4-cyclodiphosphate synthase (157 aa).

Positions 8, 10, and 42 each coordinate a divalent metal cation. 8–10 serves as a coordination point for 4-CDP-2-C-methyl-D-erythritol 2-phosphate; it reads DVH. 4-CDP-2-C-methyl-D-erythritol 2-phosphate-binding positions include 56–58, 132–135, Phe139, and Arg142; these read DIG and STSE.

Belongs to the IspF family. As to quaternary structure, homotrimer. A divalent metal cation is required as a cofactor.

It carries out the reaction 4-CDP-2-C-methyl-D-erythritol 2-phosphate = 2-C-methyl-D-erythritol 2,4-cyclic diphosphate + CMP. Its pathway is isoprenoid biosynthesis; isopentenyl diphosphate biosynthesis via DXP pathway; isopentenyl diphosphate from 1-deoxy-D-xylulose 5-phosphate: step 4/6. Functionally, involved in the biosynthesis of isopentenyl diphosphate (IPP) and dimethylallyl diphosphate (DMAPP), two major building blocks of isoprenoid compounds. Catalyzes the conversion of 4-diphosphocytidyl-2-C-methyl-D-erythritol 2-phosphate (CDP-ME2P) to 2-C-methyl-D-erythritol 2,4-cyclodiphosphate (ME-CPP) with a corresponding release of cytidine 5-monophosphate (CMP). The chain is 2-C-methyl-D-erythritol 2,4-cyclodiphosphate synthase from Dehalococcoides mccartyi (strain CBDB1).